Here is a 259-residue protein sequence, read N- to C-terminus: Probable iron export permease protein FetB (259 aa).

The Periplasmic segment spans residues 1–5 (MNSHN). The helical transmembrane segment at 6–26 (ITNESLALALMLVVVAILISH) threads the bilayer. Topologically, residues 27–35 (KEKLALEKD) are cytoplasmic. 2 helical membrane-spanning segments follow: residues 36–56 (ILWS…VLKY) and 57–77 (IFSV…CFNA). The Cytoplasmic portion of the chain corresponds to 78–91 (AWNAQKRSKYIAKA). The helical transmembrane segment at 92–112 (FISSFIAITVGAGITLAVLIL) threads the bilayer. Topologically, residues 113 to 117 (SGSIE) are periplasmic. A helical membrane pass occupies residues 118-138 (FIPMQVIPIAGMIAGNAMVAV). Residues 139–191 (GLCYNNLGQRVISEQQQIQEKLSLGATPKQASAILIRDSIRAALIPTVDSAKT) lie on the Cytoplasmic side of the membrane. A helical membrane pass occupies residues 192–212 (VGLVSLPGMMSGLIFAGIDPV). The Periplasmic segment spans residues 213 to 218 (KAIKYQ). A helical transmembrane segment spans residues 219–239 (IMVTFMLLSTASLSTIIACYL). At 240-259 (TYRKFYNSRHQLVVTQLKKK) the chain is on the cytoplasmic side.

The protein belongs to the UPF0014 family. The complex is composed of two ATP-binding proteins (FetA) and two transmembrane proteins (FetB).

It localises to the cell inner membrane. Its function is as follows. Part of the ABC transporter complex FetAB, which is probably involved in iron export and enhances resistance to H(2)O(2)-mediated oxidative stress. Probably responsible for the translocation of the substrate across the membrane. In Escherichia coli (strain K12), this protein is Probable iron export permease protein FetB (fetB).